A 454-amino-acid polypeptide reads, in one-letter code: Bifunctional protein GlmU (454 aa).

Positions 1 to 226 (MALNVVILAA…AVEVEGANNR (226 aa)) are pyrophosphorylase. UDP-N-acetyl-alpha-D-glucosamine contacts are provided by residues 8 to 11 (LAAG), lysine 22, glutamine 73, 78 to 79 (GT), 100 to 102 (YGD), glycine 137, glutamate 151, asparagine 166, and asparagine 224. Aspartate 102 lines the Mg(2+) pocket. Residue asparagine 224 coordinates Mg(2+). The segment at 227 to 247 (VQLAQLERAYQARAAEKLMLE) is linker. Residues 248–454 (GANLRDPARI…GWARPVKKAK (207 aa)) are N-acetyltransferase. UDP-N-acetyl-alpha-D-glucosamine-binding residues include arginine 330 and lysine 348. Histidine 360 serves as the catalytic Proton acceptor. Residues tyrosine 363 and asparagine 374 each coordinate UDP-N-acetyl-alpha-D-glucosamine. Acetyl-CoA-binding positions include alanine 377, 383–384 (NY), serine 402, alanine 420, and arginine 437.

In the N-terminal section; belongs to the N-acetylglucosamine-1-phosphate uridyltransferase family. It in the C-terminal section; belongs to the transferase hexapeptide repeat family. Homotrimer. It depends on Mg(2+) as a cofactor.

It is found in the cytoplasm. It carries out the reaction alpha-D-glucosamine 1-phosphate + acetyl-CoA = N-acetyl-alpha-D-glucosamine 1-phosphate + CoA + H(+). The enzyme catalyses N-acetyl-alpha-D-glucosamine 1-phosphate + UTP + H(+) = UDP-N-acetyl-alpha-D-glucosamine + diphosphate. The protein operates within nucleotide-sugar biosynthesis; UDP-N-acetyl-alpha-D-glucosamine biosynthesis; N-acetyl-alpha-D-glucosamine 1-phosphate from alpha-D-glucosamine 6-phosphate (route II): step 2/2. It participates in nucleotide-sugar biosynthesis; UDP-N-acetyl-alpha-D-glucosamine biosynthesis; UDP-N-acetyl-alpha-D-glucosamine from N-acetyl-alpha-D-glucosamine 1-phosphate: step 1/1. Its pathway is bacterial outer membrane biogenesis; LPS lipid A biosynthesis. Its function is as follows. Catalyzes the last two sequential reactions in the de novo biosynthetic pathway for UDP-N-acetylglucosamine (UDP-GlcNAc). The C-terminal domain catalyzes the transfer of acetyl group from acetyl coenzyme A to glucosamine-1-phosphate (GlcN-1-P) to produce N-acetylglucosamine-1-phosphate (GlcNAc-1-P), which is converted into UDP-GlcNAc by the transfer of uridine 5-monophosphate (from uridine 5-triphosphate), a reaction catalyzed by the N-terminal domain. This chain is Bifunctional protein GlmU, found in Shewanella piezotolerans (strain WP3 / JCM 13877).